Reading from the N-terminus, the 1040-residue chain is Multidrug resistance protein MdtB (1040 aa).

12 helical membrane passes run 16-36, 347-367, 369-389, 396-416, 440-460, 472-492, 537-557, 863-883, 888-908, 911-931, 968-988, and 998-1018; these read FIMR…AGII, LMMA…NIPA, IIPG…MVFL, LTLM…IVVI, IGFT…PLLF, FAIT…TLTP, WLTL…WVFI, LGST…VLGI, FIHP…ALLA, IAGS…IGIV, ILMT…STGV, and IGMV…TPVI.

It belongs to the resistance-nodulation-cell division (RND) (TC 2.A.6) family. MdtB subfamily. As to quaternary structure, part of a tripartite efflux system composed of MdtA, MdtB and MdtC. MdtB forms a heteromultimer with MdtC.

The protein resides in the cell inner membrane. Its function is as follows. The MdtABC tripartite complex confers resistance against novobiocin and deoxycholate. This chain is Multidrug resistance protein MdtB, found in Escherichia coli O17:K52:H18 (strain UMN026 / ExPEC).